Reading from the N-terminus, the 380-residue chain is Chromo domain-containing protein 2 (380 aa).

Disordered regions lie at residues 14–58 and 100–156; these read ISES…SLYG and KLSP…VPLN. Residues 33–52 are compositionally biased toward polar residues; the sequence is NSINNKSSTASLESPQNGSW. Over residues 108-119 the composition is skewed to acidic residues; the sequence is EDSEDKKEEDES. Low complexity predominate over residues 121–140; the sequence is SYKNEFKSSSSASVSSNFEK. A Chromo domain is found at 176–238; that stretch reads FAVEMILDSR…SRGGKPDLSS (63 aa). A disordered region spans residues 250 to 273; that stretch reads SNEASYVEKDESSNSDDSISYKRR.

The protein resides in the nucleus. In terms of biological role, component of the kinetochore which plays a role in stabilizing microtubules and so allowing accurate chromosome segregation. This chain is Chromo domain-containing protein 2 (chp2), found in Schizosaccharomyces pombe (strain 972 / ATCC 24843) (Fission yeast).